Here is a 152-residue protein sequence, read N- to C-terminus: Large ribosomal subunit protein bL9 (152 aa).

The protein belongs to the bacterial ribosomal protein bL9 family.

Binds to the 23S rRNA. The chain is Large ribosomal subunit protein bL9 from Mycobacterium marinum (strain ATCC BAA-535 / M).